A 280-amino-acid polypeptide reads, in one-letter code: MTILQAIVLAIVEGLTEFLPVSSTGHMIIAEGIMGVESTSFVRAFTVMIQFGAILSVLVLYRKRFFCFPVAPRALGQGKGKEFMSRFDLYWKLLIALVPAVILGFLFEDWVDRMLGSVWVVAVVLFLGGIFMLFVDKLFASSDRGEITYPKAFVIGLFQCLAIFLPGLSRSMATIVGGQQQKLSRKAAAEFSFFLAVPTMLGATLLKAYKLYKEGGIEIFREHMTVLLVGNIVAFIVALAAIKFFIGFLTRYGFKAFGYYRILVGGLLIVLMLSGVSLAV.

Helical transmembrane passes span 1-21 (MTIL…FLPV), 41-61 (FVRA…LVLY), 87-107 (FDLY…GFLF), 115-135 (LGSV…MLFV), 147-167 (ITYP…FLPG), 186-206 (KAAA…ATLL), 226-246 (VLLV…KFFI), and 260-280 (YRIL…SLAV).

This sequence belongs to the UppP family.

It is found in the cell inner membrane. The enzyme catalyses di-trans,octa-cis-undecaprenyl diphosphate + H2O = di-trans,octa-cis-undecaprenyl phosphate + phosphate + H(+). In terms of biological role, catalyzes the dephosphorylation of undecaprenyl diphosphate (UPP). Confers resistance to bacitracin. The chain is Undecaprenyl-diphosphatase from Porphyromonas gingivalis (strain ATCC BAA-308 / W83).